A 480-amino-acid polypeptide reads, in one-letter code: MGCNKRGVTRQEDDFSAWYNEVVAKAGLIDRGPAKGTMVIRPYGYRIWELLQDELDSKIKELGHENAYFPMLIPENYFNREAEHVEGFHPELAVVTHAGGKELSEPLVIRPTSETVIGDMMAKWITSHRDLPLRLNQWSNVVRWELRPRMLLRTIEFLWQEGHSAHIEKSDALRETLFALDIYTTLARDMAAIPIVSGEKTAGERFAGALNTYTIEAMMRDGKALQSATTHYLGDNFARAFNIRYTTAEEQQAFVHTTSFGLSTRMIGAIVMVHGDDKGLVLPPQVAPYQVVIVPITTGNKASEVGHAAADLARRLQAAGVRTHVDARPQLTPGWKYNEWELRGVPIRLELGPRDLEAGTTVMVRRIGEKAKQPIAIAAAPTELPGILEEFQRTLLERATQFRDDHTTLVDNWDAFATTVATGWALAIHCGNPECEEDIKAETAATPRCVPRQGAPATGRCIRCDAPSAYDKRVIFARAY.

Belongs to the class-II aminoacyl-tRNA synthetase family. ProS type 3 subfamily. As to quaternary structure, homodimer.

It is found in the cytoplasm. It carries out the reaction tRNA(Pro) + L-proline + ATP = L-prolyl-tRNA(Pro) + AMP + diphosphate. Catalyzes the attachment of proline to tRNA(Pro) in a two-step reaction: proline is first activated by ATP to form Pro-AMP and then transferred to the acceptor end of tRNA(Pro). This is Proline--tRNA ligase from Mycobacterium leprae (strain Br4923).